We begin with the raw amino-acid sequence, 447 residues long: Transcriptional enhancer factor TEF-4 (447 aa).

Disordered regions lie at residues 1-46 and 183-218; these read MGEP…GVWS and TPFT…PPAW. Residues 11–20 are compositionally biased toward low complexity; that stretch reads DDGSGWTGSE. Gly residues predominate over residues 25–40; sequence EGTGGSEGAGGDGGPD. The TEA DNA-binding region spans 38-114; sequence GPDAEGVWSP…QVLARRKSRE (77 aa). The tract at residues 172 to 447 is transcriptional activation; sequence WNVPDVKPFS…QHHIYRLVRD (276 aa). Residues 183–206 are compositionally biased toward low complexity; it reads TPFTLSLTPPSTDLPGYEPPQALS. The span at 207–216 shows a compositional bias: pro residues; sequence PLPPPTPSPP.

Interacts with YAP1 and WWTR1/TAZ.

The protein localises to the nucleus. Transcription factor which plays a key role in the Hippo signaling pathway, a pathway involved in organ size control and tumor suppression by restricting proliferation and promoting apoptosis. The core of this pathway is composed of a kinase cascade wherein MST1/MST2, in complex with its regulatory protein SAV1, phosphorylates and activates LATS1/2 in complex with its regulatory protein MOB1, which in turn phosphorylates and inactivates YAP1 oncoprotein and WWTR1/TAZ. Acts by mediating gene expression of YAP1 and WWTR1/TAZ, thereby regulating cell proliferation, migration and epithelial mesenchymal transition (EMT) induction. Binds to the SPH and GT-IIC 'enhansons' (5'-GTGGAATGT-3'). May be involved in the gene regulation of neural development. Binds to the M-CAT motif. The protein is Transcriptional enhancer factor TEF-4 (TEAD2) of Homo sapiens (Human).